A 486-amino-acid chain; its full sequence is Protein nucleotidyltransferase YdiU (486 aa).

Residues Gly-90, Gly-92, Arg-93, Lys-113, Asp-125, Gly-126, Arg-176, and Arg-183 each contribute to the ATP site. The active-site Proton acceptor is Asp-252. The Mg(2+) site is built by Asn-253 and Asp-262. Asp-262 is an ATP binding site.

This sequence belongs to the SELO family. It depends on Mg(2+) as a cofactor. Mn(2+) is required as a cofactor.

It carries out the reaction L-seryl-[protein] + ATP = 3-O-(5'-adenylyl)-L-seryl-[protein] + diphosphate. The catalysed reaction is L-threonyl-[protein] + ATP = 3-O-(5'-adenylyl)-L-threonyl-[protein] + diphosphate. The enzyme catalyses L-tyrosyl-[protein] + ATP = O-(5'-adenylyl)-L-tyrosyl-[protein] + diphosphate. It catalyses the reaction L-histidyl-[protein] + UTP = N(tele)-(5'-uridylyl)-L-histidyl-[protein] + diphosphate. It carries out the reaction L-seryl-[protein] + UTP = O-(5'-uridylyl)-L-seryl-[protein] + diphosphate. The catalysed reaction is L-tyrosyl-[protein] + UTP = O-(5'-uridylyl)-L-tyrosyl-[protein] + diphosphate. Its function is as follows. Nucleotidyltransferase involved in the post-translational modification of proteins. It can catalyze the addition of adenosine monophosphate (AMP) or uridine monophosphate (UMP) to a protein, resulting in modifications known as AMPylation and UMPylation. The protein is Protein nucleotidyltransferase YdiU of Pseudomonas aeruginosa (strain UCBPP-PA14).